A 211-amino-acid polypeptide reads, in one-letter code: Riboflavin kinase (211 aa).

Residues 1-81 (MKCIDRRLIG…DLLRYFNILS (81 aa)) are H-T-H motif-like. The interval 82–211 (IRLSGRVVSG…DRVEIEIYLE (130 aa)) is riboflavin kinase. 91–96 (GLGEGA) is a binding site for CDP. Positions 120 and 122 each coordinate Mg(2+). FMN-binding residues include Thr177 and Glu185. Position 190–193 (190–193 (FKLR)) interacts with CDP.

The protein belongs to the archaeal riboflavin kinase family. The cofactor is Mg(2+).

The enzyme catalyses riboflavin + CTP = CDP + FMN + H(+). Its pathway is cofactor biosynthesis; FMN biosynthesis; FMN from riboflavin (CTP route): step 1/1. In terms of biological role, catalyzes the CTP-dependent phosphorylation of riboflavin (vitamin B2) to form flavin mononucleotide (FMN). The chain is Riboflavin kinase (ribK) from Pyrobaculum islandicum (strain DSM 4184 / JCM 9189 / GEO3).